A 370-amino-acid chain; its full sequence is Prolactin-releasing peptide receptor (370 aa).

The Extracellular segment spans residues 1–62 (MASLPTQGPA…LQLVHQLKGL (62 aa)). Residues asparagine 27 and asparagine 36 are each glycosylated (N-linked (GlcNAc...) asparagine). Residues 63 to 83 (IVLLYSIVVVVGLVGNCLLVL) form a helical membrane-spanning segment. At 84 to 101 (VIARVRRLHNVTNFLIGN) the chain is on the cytoplasmic side. A helical transmembrane segment spans residues 102–122 (LALSDVLMCTACVPLTLAYAF). Topologically, residues 123-126 (EPRG) are extracellular. Residues 127 to 147 (WVFGGGLCHLVFFLQPVTVYV) traverse the membrane as a helical segment. Residues cysteine 134 and cysteine 211 are joined by a disulfide bond. Topologically, residues 148–175 (SVFTLTTIAVDRYVVLVHPLRRRISLRF) are cytoplasmic. A helical membrane pass occupies residues 176-196 (SAYAVLAIWALSAVLALPAAL). Over 197–225 (HTYHVELKPHRVRLCEEFWGSQERQRQLY) the chain is Extracellular. The helical transmembrane segment at 226–246 (AWGLLLVTYLLPLLVILLSYV) threads the bilayer. Residues 247–276 (RVSVNLRNRVVPGCVTQSQADWDRARRRRT) lie on the Cytoplasmic side of the membrane. Residues 277-297 (FCLLVVVVVVFAVCWLPLHVF) form a helical membrane-spanning segment. The Extracellular segment spans residues 298-317 (NLLRDLDPHAIDPYAFGLVQ). A helical transmembrane segment spans residues 318 to 338 (LLCHWLAMSSACYNPFIYAWL). The Cytoplasmic portion of the chain corresponds to 339 to 369 (HDSFREELRKLLLAWPRKIAPHGQSMTVSVV). The interval 365-370 (TVSVVI) is required for interaction with GRIP1, GRIP2 and PICK1.

Belongs to the G-protein coupled receptor 1 family. As to quaternary structure, interacts through its C-terminal region with the PDZ domain-containing proteins GRIP1, GRIP2 and PICK1. Interacts with PDZ domains 4 and 5 of GRIP1 and with the PDZ domain of PICK1.

It localises to the cell membrane. Receptor for prolactin-releasing peptide (PrRP). Implicated in lactation, regulation of food intake and pain-signal processing. This is Prolactin-releasing peptide receptor (PRLHR) from Bos taurus (Bovine).